Consider the following 458-residue polypeptide: Probable M18 family aminopeptidase 1 (458 aa).

H95, H170, and H434 together coordinate Zn(2+).

It belongs to the peptidase M18 family. Zn(2+) serves as cofactor.

The polypeptide is Probable M18 family aminopeptidase 1 (Borrelia garinii subsp. bavariensis (strain ATCC BAA-2496 / DSM 23469 / PBi) (Borreliella bavariensis)).